The chain runs to 101 residues: Large ribosomal subunit protein uL24 (101 aa).

This sequence belongs to the universal ribosomal protein uL24 family. In terms of assembly, part of the 50S ribosomal subunit.

In terms of biological role, one of two assembly initiator proteins, it binds directly to the 5'-end of the 23S rRNA, where it nucleates assembly of the 50S subunit. Its function is as follows. One of the proteins that surrounds the polypeptide exit tunnel on the outside of the subunit. In Jannaschia sp. (strain CCS1), this protein is Large ribosomal subunit protein uL24.